A 1404-amino-acid chain; its full sequence is DNA-directed RNA polymerase subunit beta' (1404 aa).

Residues Cys70, Cys72, Cys85, and Cys88 each contribute to the Zn(2+) site. 3 residues coordinate Mg(2+): Asp460, Asp462, and Asp464. 4 residues coordinate Zn(2+): Cys814, Cys889, Cys896, and Cys899. The tract at residues 1377 to 1404 (DSEMETLSGKPAAAEPVAAVADAGADEE) is disordered. The span at 1387–1404 (PAAAEPVAAVADAGADEE) shows a compositional bias: low complexity.

It belongs to the RNA polymerase beta' chain family. As to quaternary structure, the RNAP catalytic core consists of 2 alpha, 1 beta, 1 beta' and 1 omega subunit. When a sigma factor is associated with the core the holoenzyme is formed, which can initiate transcription. It depends on Mg(2+) as a cofactor. The cofactor is Zn(2+).

It catalyses the reaction RNA(n) + a ribonucleoside 5'-triphosphate = RNA(n+1) + diphosphate. DNA-dependent RNA polymerase catalyzes the transcription of DNA into RNA using the four ribonucleoside triphosphates as substrates. This is DNA-directed RNA polymerase subunit beta' from Xanthomonas euvesicatoria pv. vesicatoria (strain 85-10) (Xanthomonas campestris pv. vesicatoria).